Consider the following 244-residue polypeptide: rRNA adenine N-6-methyltransferase (244 aa).

Residues N11, I13, G38, E59, D84, and N101 each coordinate S-adenosyl-L-methionine.

Belongs to the class I-like SAM-binding methyltransferase superfamily. rRNA adenine N(6)-methyltransferase family.

The catalysed reaction is adenosine(2085) in 23S rRNA + 2 S-adenosyl-L-methionine = N(6)-dimethyladenosine(2085) in 23S rRNA + 2 S-adenosyl-L-homocysteine + 2 H(+). This protein produces a dimethylation of the adenine residue at position 2085 in 23S rRNA, resulting in reduced affinity between ribosomes and macrolide-lincosamide-streptogramin B antibiotics. This Staphylococcus aureus protein is rRNA adenine N-6-methyltransferase (ermC).